We begin with the raw amino-acid sequence, 658 residues long: Sodium/nucleoside cotransporter 1 (658 aa).

Topologically, residues 1–75 are cytoplasmic; sequence MEKASGRKSL…ARTFCQRHAS (75 aa). The helical transmembrane segment at 76 to 99 threads the bilayer; that stretch reads LFKKILLGLLCLAYAAYFLAACIL. The Extracellular portion of the chain corresponds to 100 to 104; sequence DFQRA. The helical transmembrane segment at 105-123 threads the bilayer; the sequence is LALFVITCLVILVLLLHFL. Residues 124–142 lie on the Cytoplasmic side of the membrane; that stretch reads KKFLGKKLTRCLKPFKNSQ. A helical membrane pass occupies residues 143–162; it reads LRLWIKRVFAGVSLVGLILW. The Extracellular segment spans residues 163-173; sequence LALDTAQRPEQ. The chain crosses the membrane as a helical span at residues 174–190; the sequence is LISFAGICMFVLILFAC. Over 191 to 196 the chain is Cytoplasmic; the sequence is SKHHSA. The chain crosses the membrane as a helical span at residues 197–217; sequence VSWRTVFWGLGLQFVFGLLVI. At 218-256 the chain is on the extracellular side; sequence RTDPGFIAFQWLGDQVQIFLAYTVAGSSFVLGDTLVNDV. The chain crosses the membrane as a helical span at residues 257-278; that stretch reads FAFQSLPIIIFFGCVMSILYYL. The Cytoplasmic segment spans residues 279-289; that stretch reads GLVQWVVQKIA. A helical membrane pass occupies residues 290–313; the sequence is WFLQVTMRTTATETLAVAGNIFVG. Residues 314–332 are Extracellular-facing; the sequence is MTEAPLLIRPYLADLTLSE. The helical transmembrane segment at 333–355 threads the bilayer; the sequence is IHAVMTSGFATISGTVLGAFISF. Residues 356-361 are Cytoplasmic-facing; the sequence is GIDASS. A helical transmembrane segment spans residues 362–381; it reads LISASVMGAPCALALSKLVY. The Extracellular segment spans residues 382-418; the sequence is PEEEESKFKSKEGVKLPRGKESNVLEAASNGATDAIA. Residues 419–441 traverse the membrane as a helical segment; it reads LVANVAANLVAFLAVLAFINAAL. At 442 to 452 the chain is on the cytoplasmic side; that stretch reads SWLGELVDIQG. The helical transmembrane segment at 453-474 threads the bilayer; that stretch reads LTFQVICSYILRPMVYMMGVEW. The Extracellular portion of the chain corresponds to 475–529; sequence TDCPMVAEMVGIKFFTNEFVAYQQLSQYKKKRLSGMEEWIDGQKQWISVRAEVIT. The helical transmembrane segment at 530–553 threads the bilayer; sequence TFSLCGFANLSSIGITLGGLTSMV. Residues 554–564 are Cytoplasmic-facing; that stretch reads PHRKSDLSKVV. The helical transmembrane segment at 565-587 threads the bilayer; the sequence is IRALFTGSCVSFISACVAGILYV. Residues 588 to 658 lie on the Extracellular side of the membrane; the sequence is PRGAETDCVS…CGFYNNTVCA (71 aa). Residue N653 is glycosylated (N-linked (GlcNAc...) asparagine).

This sequence belongs to the concentrative nucleoside transporter (CNT) (TC 2.A.41) family. In terms of processing, N-glycosylated. N-glycosylation is required for localization to the plasma membrane and the transporter activity.

Its subcellular location is the cell membrane. The protein resides in the apical cell membrane. It catalyses the reaction uridine(out) + Na(+)(out) = uridine(in) + Na(+)(in). The enzyme catalyses thymidine(out) + Na(+)(out) = thymidine(in) + Na(+)(in). It carries out the reaction cytidine(out) + Na(+)(out) = cytidine(in) + Na(+)(in). The catalysed reaction is adenosine(out) + Na(+)(out) = adenosine(in) + Na(+)(in). Due to its high apparent affinity but slow transport, adenosine could act as a negative regulator of pyrimidine transport under some conditions. Sodium and pyrimidine nucleoside symporter of the plasma membrane that imports uridine, thymidine and cytidine into cells by coupling their transport to the transmembrane sodium electrochemical gradient. Also transports adenosine, an atypical substrate transported with high apparent affinity, but low maximum velocity. Therefore, exhibits the transport characteristics of the nucleoside transport system cit or N2 subtype (N2/cit). Involved in renal nucleoside (re)absorption. This is Sodium/nucleoside cotransporter 1 (SLC28A1) from Oryctolagus cuniculus (Rabbit).